The primary structure comprises 150 residues: Ribonuclease K6 (150 aa).

The signal sequence occupies residues 1–23 (MVLCFPLLLLVLVLWGQVCPLHA). Histidine 38 (proton acceptor) is an active-site residue. Cystine bridges form between cysteine 46–cysteine 104, cysteine 60–cysteine 114, cysteine 78–cysteine 129, and cysteine 85–cysteine 92. N-linked (GlcNAc...) asparagine glycosylation occurs at asparagine 55. Substrate-binding positions include 61–65 (KPQNT) and lysine 86. N-linked (GlcNAc...) asparagine glycosylation is present at asparagine 100. Residue arginine 105 participates in substrate binding. Histidine 145 serves as the catalytic Proton donor.

This sequence belongs to the pancreatic ribonuclease family. As to quaternary structure, interacts (via N-terminus) with bacterial lipopolysaccharide (LPS).

It localises to the secreted. It is found in the lysosome. Its subcellular location is the cytoplasmic granule. Its function is as follows. Ribonuclease which shows a preference for the pyrimidines uridine and cytosine. Has potent antibacterial activity against a range of Gram-positive and Gram-negative bacteria, including P.aeruginosa, A.baumanii, M.luteus, S.aureus, E.faecalis, E.faecium, S.saprophyticus and E.coli. Causes loss of bacterial membrane integrity, and also promotes agglutination of Gram-negative bacteria. Probably contributes to urinary tract sterility. Bactericidal activity is independent of RNase activity. The polypeptide is Ribonuclease K6 (RNASE6) (Aotus trivirgatus (Three-striped night monkey)).